Consider the following 190-residue polypeptide: Guanylate kinase (190 aa).

Positions 7-186 constitute a Guanylate kinase-like domain; sequence GKLIVFSAPS…AVDDVEAAIV (180 aa). 14–21 serves as a coordination point for ATP; the sequence is APSGAGKT.

Belongs to the guanylate kinase family.

The protein localises to the cytoplasm. It catalyses the reaction GMP + ATP = GDP + ADP. In terms of biological role, essential for recycling GMP and indirectly, cGMP. The polypeptide is Guanylate kinase (Chlorobium chlorochromatii (strain CaD3)).